A 193-amino-acid polypeptide reads, in one-letter code: Cysteine and glycine-rich protein 2 (193 aa).

Positions 10–61 constitute an LIM zinc-binding 1 domain; it reads CGACGRTVYHAEEVQCDGRSFHRCCFLCMVCRKNLDSTTVAIHDEEIYCKSC. The Nuclear localization signal motif lies at 64-69; that stretch reads KKYGPK. A Glycyl lysine isopeptide (Lys-Gly) (interchain with G-Cter in SUMO2) cross-link involves residue lysine 91. An N6-acetyllysine mark is found at lysine 112 and lysine 131. Residues 119-170 enclose the LIM zinc-binding 2 domain; that stretch reads CSRCGDSVYAAEKIIGAGKPWHKNCFRCAKCGKSLESTTLTEKEGEIYCKGC. Residue lysine 137 is modified to N6-acetyllysine; alternate. At lysine 137 the chain carries N6-succinyllysine; alternate. The residue at position 161 (lysine 161) is an N6-acetyllysine.

In terms of assembly, interacts with KAT14. The LIM domain 1 is necessary and sufficient for this interaction. Interacts with GLRX3.

The protein localises to the nucleus. In terms of biological role, drastically down-regulated in response to PDGF-BB or cell injury, that promote smooth muscle cell proliferation and dedifferentiation. Seems to play a role in the development of the embryonic vascular system. The chain is Cysteine and glycine-rich protein 2 (Csrp2) from Mus musculus (Mouse).